We begin with the raw amino-acid sequence, 269 residues long: MNNEQLITNVKPKKEPLKTAIEIKDFNFFYNKGKTQSLFNINMEIKEKSITTFIGPSGCGKTTLLKSINRLNDLIDGVKMSGAIKIFDKDIFASDIDITKLRTEVGMVFQKPNPFPISIYDNVVYGLRSLGIKDKAILDQICEESLIKAALWDEVKDILNSPALGLSGGQQQRLCIARAIAMKPKILLMDEPTSALDPIATLKVEELVLDLKKDYTIVMVTHSLQQATRISDYTAYFLKGELIEFNKTKKIFTNPKDRRTENYISGRYE.

The region spanning 21–264 (IEIKDFNFFY…PKDRRTENYI (244 aa)) is the ABC transporter domain. 55 to 62 (GPSGCGKT) is an ATP binding site.

Belongs to the ABC transporter superfamily. Phosphate importer (TC 3.A.1.7) family. As to quaternary structure, the complex is composed of two ATP-binding proteins (PstB), two transmembrane proteins (PstC and PstA) and a solute-binding protein (PstS).

It localises to the cell membrane. The catalysed reaction is phosphate(out) + ATP + H2O = ADP + 2 phosphate(in) + H(+). Its function is as follows. Part of the ABC transporter complex PstSACB involved in phosphate import. Responsible for energy coupling to the transport system. This Mycoplasma capricolum subsp. capricolum (strain California kid / ATCC 27343 / NCTC 10154) protein is Phosphate import ATP-binding protein PstB.